Reading from the N-terminus, the 279-residue chain is Phosphatidylglycerol--prolipoprotein diacylglyceryl transferase (279 aa).

Helical transmembrane passes span 18–38 (LSVR…YFVA), 55–75 (IIFY…VIFQ), and 89–109 (IWHG…AGVI). Position 137 (Arg137) interacts with a 1,2-diacyl-sn-glycero-3-phospho-(1'-sn-glycerol). Transmembrane regions (helical) follow at residues 203-223 (LGET…FIEG) and 235-255 (IRVA…LIVY).

The protein belongs to the Lgt family.

Its subcellular location is the cell membrane. It carries out the reaction L-cysteinyl-[prolipoprotein] + a 1,2-diacyl-sn-glycero-3-phospho-(1'-sn-glycerol) = an S-1,2-diacyl-sn-glyceryl-L-cysteinyl-[prolipoprotein] + sn-glycerol 1-phosphate + H(+). The protein operates within protein modification; lipoprotein biosynthesis (diacylglyceryl transfer). Catalyzes the transfer of the diacylglyceryl group from phosphatidylglycerol to the sulfhydryl group of the N-terminal cysteine of a prolipoprotein, the first step in the formation of mature lipoproteins. In Staphylococcus aureus (strain Mu3 / ATCC 700698), this protein is Phosphatidylglycerol--prolipoprotein diacylglyceryl transferase.